Here is a 311-residue protein sequence, read N- to C-terminus: Replication initiation protein (311 aa).

The protein belongs to the plasmid replication initiation factor family.

In terms of biological role, this protein is probably a specific topoisomerase involved in initiating replication. This protein is specifically required and may be rate-limiting for replication of the plasmid in vivo. The polypeptide is Replication initiation protein (repD) (Staphylococcus aureus).